A 205-amino-acid chain; its full sequence is High frequency lysogenization protein HflD homolog (205 aa).

This sequence belongs to the HflD family.

The protein localises to the cytoplasm. It is found in the cell inner membrane. This chain is High frequency lysogenization protein HflD homolog, found in Shewanella sp. (strain W3-18-1).